The sequence spans 121 residues: UPF0102 protein Syncc9902_1284 (121 aa).

It belongs to the UPF0102 family.

The chain is UPF0102 protein Syncc9902_1284 from Synechococcus sp. (strain CC9902).